Consider the following 907-residue polypeptide: Protein translocase subunit SecA (907 aa).

Residues glutamine 87, 105 to 109, and aspartate 512 contribute to the ATP site; that span reads GEGKT. A disordered region spans residues 870–897; that stretch reads AALAATQPQVREGEKVGRNDPCPCGSGK. Zn(2+) contacts are provided by cysteine 891, cysteine 893, cysteine 902, and histidine 903.

The protein belongs to the SecA family. In terms of assembly, monomer and homodimer. Part of the essential Sec protein translocation apparatus which comprises SecA, SecYEG and auxiliary proteins SecDF-YajC and YidC. The cofactor is Zn(2+).

Its subcellular location is the cell inner membrane. It is found in the cytoplasm. The catalysed reaction is ATP + H2O + cellular proteinSide 1 = ADP + phosphate + cellular proteinSide 2.. Part of the Sec protein translocase complex. Interacts with the SecYEG preprotein conducting channel. Has a central role in coupling the hydrolysis of ATP to the transfer of proteins into and across the cell membrane, serving both as a receptor for the preprotein-SecB complex and as an ATP-driven molecular motor driving the stepwise translocation of polypeptide chains across the membrane. The sequence is that of Protein translocase subunit SecA from Shewanella piezotolerans (strain WP3 / JCM 13877).